A 524-amino-acid polypeptide reads, in one-letter code: Solute carrier family 40 member 1 (524 aa).

Basic and acidic residues predominate over residues 1 to 18; the sequence is MENETELRVVHQEEQQRE. Residues 1–30 form a disordered region; sequence MENETELRVVHQEEQQREEGEDESQPQNPP. 11 helical membrane passes run 70-92, 109-129, 137-157, 191-211, 218-238, 314-334, 347-367, 380-400, 409-429, 446-466, and 472-492; these read SLLL…GPIV, LLFQ…LLLV, LPVF…GVLS, GIDL…ISFV, ITFA…FISV, VVLP…FGTL, YIIG…TLVY, GLWS…SIWV, MLMA…LAVI, GVQN…GIIV, and FWIL…LYTI.

It belongs to the ferroportin (FP) (TC 2.A.100) family. SLC40A subfamily.

It is found in the membrane. In terms of biological role, may be involved in iron transport and iron homeostasis. The sequence is that of Solute carrier family 40 member 1 (IREG1) from Arabidopsis thaliana (Mouse-ear cress).